The following is a 119-amino-acid chain: MARVKRAKNARKNHKKVLKLAKGYYGGKSKLFKTANESVIRALRNSYVGRKNKKRDYRRLWIARINAATRINGLSYSKFMNGIKLAGIDINRKMLSEIAINDAKAFADLVEVAKKQLNA.

It belongs to the bacterial ribosomal protein bL20 family.

Functionally, binds directly to 23S ribosomal RNA and is necessary for the in vitro assembly process of the 50S ribosomal subunit. It is not involved in the protein synthesizing functions of that subunit. The sequence is that of Large ribosomal subunit protein bL20 from Clostridium botulinum (strain Alaska E43 / Type E3).